A 535-amino-acid chain; its full sequence is GMP synthase [glutamine-hydrolyzing] (535 aa).

Residues 24 to 217 (KILIVDFGSQ…VRNISGLGGD (194 aa)) enclose the Glutamine amidotransferase type-1 domain. The active-site Nucleophile is the C101. Active-site residues include H191 and E193. In terms of domain architecture, GMPS ATP-PPase spans 218 to 410 (WTMHAFREEE…LGLPDVFVGR (193 aa)). 245 to 251 (SGGVDSA) provides a ligand contact to ATP.

In terms of assembly, homodimer.

The enzyme catalyses XMP + L-glutamine + ATP + H2O = GMP + L-glutamate + AMP + diphosphate + 2 H(+). It functions in the pathway purine metabolism; GMP biosynthesis; GMP from XMP (L-Gln route): step 1/1. Catalyzes the synthesis of GMP from XMP. This is GMP synthase [glutamine-hydrolyzing] from Bradyrhizobium sp. (strain ORS 278).